A 61-amino-acid chain; its full sequence is Sec-independent protein translocase protein TatA (61 aa).

A helical membrane pass occupies residues 1–21 (MFGIGMPEMLIILVIILIIFG).

Belongs to the TatA/E family. In terms of assembly, the Tat system comprises two distinct complexes: a TatABC complex, containing multiple copies of TatA, TatB and TatC subunits, and a separate TatA complex, containing only TatA subunits. Substrates initially bind to the TatABC complex, which probably triggers association of the separate TatA complex to form the active translocon.

It is found in the cell inner membrane. Part of the twin-arginine translocation (Tat) system that transports large folded proteins containing a characteristic twin-arginine motif in their signal peptide across membranes. TatA could form the protein-conducting channel of the Tat system. This is Sec-independent protein translocase protein TatA from Syntrophus aciditrophicus (strain SB).